Here is a 472-residue protein sequence, read N- to C-terminus: Uronate isomerase (472 aa).

Belongs to the metallo-dependent hydrolases superfamily. Uronate isomerase family.

It catalyses the reaction D-glucuronate = D-fructuronate. The catalysed reaction is aldehydo-D-galacturonate = keto-D-tagaturonate. The protein operates within carbohydrate metabolism; pentose and glucuronate interconversion. The sequence is that of Uronate isomerase from Halalkalibacterium halodurans (strain ATCC BAA-125 / DSM 18197 / FERM 7344 / JCM 9153 / C-125) (Bacillus halodurans).